A 1358-amino-acid chain; its full sequence is DNA-directed RNA polymerase subunit beta (1358 aa).

Belongs to the RNA polymerase beta chain family. The RNAP catalytic core consists of 2 alpha, 1 beta, 1 beta' and 1 omega subunit. When a sigma factor is associated with the core the holoenzyme is formed, which can initiate transcription.

The catalysed reaction is RNA(n) + a ribonucleoside 5'-triphosphate = RNA(n+1) + diphosphate. Its function is as follows. DNA-dependent RNA polymerase catalyzes the transcription of DNA into RNA using the four ribonucleoside triphosphates as substrates. The polypeptide is DNA-directed RNA polymerase subunit beta (Methylococcus capsulatus (strain ATCC 33009 / NCIMB 11132 / Bath)).